Here is a 388-residue protein sequence, read N- to C-terminus: Probable aspartic-type endopeptidase MCYG_06955 (388 aa).

The first 21 residues, 1-21 (MMGPFFYFTAYVSLLFAFTQA), serve as a signal peptide directing secretion. N-linked (GlcNAc...) asparagine glycosylation is found at N82 and N104. Residues 96–384 (FVNEITVGND…DYDGPKIGFA (289 aa)) enclose the Peptidase A1 domain. D112 is an active-site residue. Residues N209 and N261 are each glycosylated (N-linked (GlcNAc...) asparagine). Residue D278 is part of the active site. N-linked (GlcNAc...) asparagine glycosylation is found at N315 and N320.

Belongs to the peptidase A1 family.

It localises to the secreted. Probable aspartic-type endopeptidase which contributes to virulence. The protein is Probable aspartic-type endopeptidase MCYG_06955 of Arthroderma otae (strain ATCC MYA-4605 / CBS 113480) (Microsporum canis).